Here is a 516-residue protein sequence, read N- to C-terminus: Oxysterol-binding protein-like protein 1 (516 aa).

2 disordered regions span residues 168–240 (PLGK…SQKS) and 459–501 (KQEI…EEGK). Positions 178–187 (SRTTSSQSVA) are enriched in polar residues. S182 is subject to Phosphoserine. Positions 197–206 (TSKKKSSKKN) are enriched in basic residues. Positions 218–238 (DRSSTAPSTAESNNEHLSSSQ) are enriched in polar residues.

Belongs to the OSBP family.

Its subcellular location is the endoplasmic reticulum. This chain is Oxysterol-binding protein-like protein 1 (obp1), found in Schizosaccharomyces pombe (strain 972 / ATCC 24843) (Fission yeast).